The chain runs to 430 residues: Enolase (430 aa).

Glutamine 163 contributes to the (2R)-2-phosphoglycerate binding site. Glutamate 205 (proton donor) is an active-site residue. Residues aspartate 242, glutamate 287, and aspartate 314 each coordinate Mg(2+). (2R)-2-phosphoglycerate contacts are provided by lysine 339, arginine 368, serine 369, and lysine 390. Lysine 339 serves as the catalytic Proton acceptor.

This sequence belongs to the enolase family. Mg(2+) serves as cofactor.

The protein resides in the cytoplasm. It is found in the secreted. The protein localises to the cell surface. The catalysed reaction is (2R)-2-phosphoglycerate = phosphoenolpyruvate + H2O. Its pathway is carbohydrate degradation; glycolysis; pyruvate from D-glyceraldehyde 3-phosphate: step 4/5. Functionally, catalyzes the reversible conversion of 2-phosphoglycerate (2-PG) into phosphoenolpyruvate (PEP). It is essential for the degradation of carbohydrates via glycolysis. In Listeria innocua serovar 6a (strain ATCC BAA-680 / CLIP 11262), this protein is Enolase.